The primary structure comprises 300 residues: Ribosomal protein L11 methyltransferase (300 aa).

Residues Thr-141, Gly-164, Asp-186, and Asn-233 each coordinate S-adenosyl-L-methionine.

The protein belongs to the methyltransferase superfamily. PrmA family.

The protein localises to the cytoplasm. The catalysed reaction is L-lysyl-[protein] + 3 S-adenosyl-L-methionine = N(6),N(6),N(6)-trimethyl-L-lysyl-[protein] + 3 S-adenosyl-L-homocysteine + 3 H(+). Its function is as follows. Methylates ribosomal protein L11. The protein is Ribosomal protein L11 methyltransferase of Synechocystis sp. (strain ATCC 27184 / PCC 6803 / Kazusa).